The primary structure comprises 501 residues: Prostacyclin synthase (501 aa).

A helical membrane pass occupies residues 1 to 21 (MSWAALLGLLAVLLLLLLLLS). Residues Arg-107, Leu-113, Asn-288, 359 to 360 (TR), and Arg-383 contribute to the substrate site. Residue Cys-442 coordinates heme.

Belongs to the cytochrome P450 family. It depends on heme as a cofactor.

The protein resides in the endoplasmic reticulum membrane. The catalysed reaction is prostaglandin H2 = prostaglandin I2. The enzyme catalyses a hydroperoxyeicosatetraenoate = an oxoeicosatetraenoate + H2O. It carries out the reaction (15S)-hydroperoxy-(5Z,8Z,11Z,13E)-eicosatetraenoate = 15-oxo-(5Z,8Z,11Z,13E)-eicosatetraenoate + H2O. It catalyses the reaction (15S)-hydroperoxy-(5Z,8Z,11Z,13E)-eicosatetraenoate + AH2 = (15S)-hydroxy-(5Z,8Z,11Z,13E)-eicosatetraenoate + A + H2O. In terms of biological role, catalyzes the biosynthesis and metabolism of eicosanoids. Catalyzes the isomerization of prostaglandin H2 to prostacyclin (= prostaglandin I2), a potent mediator of vasodilation and inhibitor of platelet aggregation. Additionally, displays dehydratase activity, toward hydroperoxyeicosatetraenoates (HPETEs), especially toward (15S)-hydroperoxy-(5Z,8Z,11Z,13E)-eicosatetraenoate (15(S)-HPETE). This Rattus norvegicus (Rat) protein is Prostacyclin synthase (Ptgis).